Here is a 92-residue protein sequence, read N- to C-terminus: Small ribosomal subunit protein bS18 (92 aa).

This sequence belongs to the bacterial ribosomal protein bS18 family. In terms of assembly, part of the 30S ribosomal subunit. Forms a tight heterodimer with protein bS6.

In terms of biological role, binds as a heterodimer with protein bS6 to the central domain of the 16S rRNA, where it helps stabilize the platform of the 30S subunit. This chain is Small ribosomal subunit protein bS18, found in Ralstonia nicotianae (strain ATCC BAA-1114 / GMI1000) (Ralstonia solanacearum).